The following is an 84-amino-acid chain: Cytochrome b559 subunit alpha (84 aa).

The helical transmembrane segment at 24 to 38 (IIHAVTLPAIFIAGF) threads the bilayer. Residue H26 participates in heme binding.

Belongs to the PsbE/PsbF family. Heterodimer of an alpha subunit and a beta subunit. PSII is composed of 1 copy each of membrane proteins PsbA, PsbB, PsbC, PsbD, PsbE, PsbF, PsbH, PsbI, PsbJ, PsbK, PsbL, PsbM, PsbT, PsbX, PsbY, Psb30/Ycf12, peripheral proteins PsbO, CyanoQ (PsbQ), PsbU, PsbV and a large number of cofactors. It forms dimeric complexes. Heme b is required as a cofactor.

It localises to the cellular thylakoid membrane. Functionally, this b-type cytochrome is tightly associated with the reaction center of photosystem II (PSII). PSII is a light-driven water:plastoquinone oxidoreductase that uses light energy to abstract electrons from H(2)O, generating O(2) and a proton gradient subsequently used for ATP formation. It consists of a core antenna complex that captures photons, and an electron transfer chain that converts photonic excitation into a charge separation. This chain is Cytochrome b559 subunit alpha, found in Prochlorococcus marinus subsp. pastoris (strain CCMP1986 / NIES-2087 / MED4).